The following is a 341-amino-acid chain: Phosphoribosylformylglycinamidine cyclo-ligase (341 aa).

Belongs to the AIR synthase family.

The protein resides in the cytoplasm. It carries out the reaction 2-formamido-N(1)-(5-O-phospho-beta-D-ribosyl)acetamidine + ATP = 5-amino-1-(5-phospho-beta-D-ribosyl)imidazole + ADP + phosphate + H(+). It functions in the pathway purine metabolism; IMP biosynthesis via de novo pathway; 5-amino-1-(5-phospho-D-ribosyl)imidazole from N(2)-formyl-N(1)-(5-phospho-D-ribosyl)glycinamide: step 2/2. The chain is Phosphoribosylformylglycinamidine cyclo-ligase from Alkaliphilus oremlandii (strain OhILAs) (Clostridium oremlandii (strain OhILAs)).